The primary structure comprises 83 residues: MSSGGLLLLLGLLTLWEALTPVSSTDRPEFCELPEDSGPCKGLFHVFYYNSDQNQCLEFIYGGCYGNANNFKTIEECKRTCAA.

An N-terminal signal peptide occupies residues 1-24; it reads MSSGGLLLLLGLLTLWEALTPVSS. Residues 31–81 form the BPTI/Kunitz inhibitor domain; it reads CELPEDSGPCKGLFHVFYYNSDQNQCLEFIYGGCYGNANNFKTIEECKRTC. Intrachain disulfides connect C40–C64 and C56–C77.

Belongs to the venom Kunitz-type family. In terms of tissue distribution, expressed by the venom gland.

The protein resides in the secreted. Functionally, serine protease inhibitor. This is Kunitz-type serine protease inhibitor nigrescinin-1 from Cryptophis nigrescens (Eastern small-eyed snake).